Consider the following 432-residue polypeptide: Gamma-glutamyl phosphate reductase (432 aa).

Belongs to the gamma-glutamyl phosphate reductase family.

It is found in the cytoplasm. The enzyme catalyses L-glutamate 5-semialdehyde + phosphate + NADP(+) = L-glutamyl 5-phosphate + NADPH + H(+). The protein operates within amino-acid biosynthesis; L-proline biosynthesis; L-glutamate 5-semialdehyde from L-glutamate: step 2/2. Functionally, catalyzes the NADPH-dependent reduction of L-glutamate 5-phosphate into L-glutamate 5-semialdehyde and phosphate. The product spontaneously undergoes cyclization to form 1-pyrroline-5-carboxylate. This is Gamma-glutamyl phosphate reductase from Methylorubrum populi (strain ATCC BAA-705 / NCIMB 13946 / BJ001) (Methylobacterium populi).